The primary structure comprises 307 residues: Methionyl-tRNA formyltransferase (307 aa).

109–112 (SLLP) serves as a coordination point for (6S)-5,6,7,8-tetrahydrofolate.

This sequence belongs to the Fmt family.

It catalyses the reaction L-methionyl-tRNA(fMet) + (6R)-10-formyltetrahydrofolate = N-formyl-L-methionyl-tRNA(fMet) + (6S)-5,6,7,8-tetrahydrofolate + H(+). Functionally, attaches a formyl group to the free amino group of methionyl-tRNA(fMet). The formyl group appears to play a dual role in the initiator identity of N-formylmethionyl-tRNA by promoting its recognition by IF2 and preventing the misappropriation of this tRNA by the elongation apparatus. This is Methionyl-tRNA formyltransferase from Dechloromonas aromatica (strain RCB).